Reading from the N-terminus, the 170-residue chain is RxLR effector protein PITG_07555 (170 aa).

Residues 1-17 (MQAYHLLLVCMYISCSA) form the signal peptide. The RxLR-dEER motif lies at 50 to 62 (RALRTHNPDREER).

This sequence belongs to the RxLR effector family.

It localises to the secreted. The protein localises to the host cytoplasm. The protein resides in the host nucleus. In terms of biological role, effector that enhances P.infestans colonization of Nicotiana benthamiana leaves. This Phytophthora infestans (strain T30-4) (Potato late blight agent) protein is RxLR effector protein PITG_07555.